The primary structure comprises 333 residues: Phosphate acyltransferase (333 aa).

The protein belongs to the PlsX family. Homodimer. Probably interacts with PlsY.

It is found in the cytoplasm. The catalysed reaction is a fatty acyl-[ACP] + phosphate = an acyl phosphate + holo-[ACP]. Its pathway is lipid metabolism; phospholipid metabolism. Its function is as follows. Catalyzes the reversible formation of acyl-phosphate (acyl-PO(4)) from acyl-[acyl-carrier-protein] (acyl-ACP). This enzyme utilizes acyl-ACP as fatty acyl donor, but not acyl-CoA. This Thermoanaerobacterium thermosaccharolyticum (strain ATCC 7956 / DSM 571 / NCIMB 9385 / NCA 3814 / NCTC 13789 / WDCM 00135 / 2032) (Clostridium thermosaccharolyticum) protein is Phosphate acyltransferase.